Consider the following 56-residue polypeptide: Large ribosomal subunit protein eL40 (56 aa).

The protein belongs to the eukaryotic ribosomal protein eL40 family.

The protein is Large ribosomal subunit protein eL40 of Sulfurisphaera tokodaii (strain DSM 16993 / JCM 10545 / NBRC 100140 / 7) (Sulfolobus tokodaii).